The following is a 590-amino-acid chain: Potassium-transporting ATPase potassium-binding subunit (590 aa).

A run of 12 helical transmembrane segments spans residues 3-23, 63-83, 134-154, 177-197, 284-304, 312-332, 359-379, 388-408, 411-431, 451-471, 515-535, and 558-578; these read AFLL…KPLG, HYAL…YALQ, GLAV…IALI, VYVL…QGVI, FVQM…FGGM, WAVL…LAWA, FGIV…CGAV, ALGG…FGGV, GLYG…LMIG, IAIL…VVVT, LALG…VLAM, and LFVV…YIPA.

Belongs to the KdpA family. As to quaternary structure, the system is composed of three essential subunits: KdpA, KdpB and KdpC.

It is found in the cell inner membrane. Functionally, part of the high-affinity ATP-driven potassium transport (or Kdp) system, which catalyzes the hydrolysis of ATP coupled with the electrogenic transport of potassium into the cytoplasm. This subunit binds the periplasmic potassium ions and delivers the ions to the membrane domain of KdpB through an intramembrane tunnel. This Ralstonia pickettii (strain 12J) protein is Potassium-transporting ATPase potassium-binding subunit.